The sequence spans 2299 residues: Acetyl-CoA carboxylase dmxL1 (2299 aa).

A compositionally biased stretch (low complexity) spans 21–39; sequence TSIPASVPASAPPSSSAPH. Positions 21–41 are disordered; that stretch reads TSIPASVPASAPPSSSAPHAA. The Biotin carboxylation domain occupies 75–583; the sequence is VITNVLIANN…TTGWLDELIT (509 aa). An ATP-grasp 1 domain is found at 227–424; that stretch reads QVAIDADGIV…LPAAQLQIAM (198 aa). 258-315 contacts ATP; the sequence is AKEIGFPVMIKASEGGGGKGIRKCEQEEGFEALYNAASSEIPGSPIFIMKLAGNARHL. Positions 381, 395, and 397 each coordinate Mg(2+). Residues Glu381, Glu395, and Asn397 each contribute to the Mn(2+) site. In terms of domain architecture, Biotinyl-binding spans 710–784; it reads LEQENDPTQL…EPGDVLGILT (75 aa). Lys751 bears the N6-biotinyllysine mark. Residues 1159-1208 form a disordered region; sequence DMEMSSQLSTPSTPATPPTPPYENGKQSKGVGSISDMSNLIENPDKEPTR. Residues 1539-1887 form the CoA carboxyltransferase N-terminal domain; the sequence is PTKALEWLQP…KKNTLVPIGP (349 aa). In terms of domain architecture, CoA carboxyltransferase C-terminal spans 1891–2205; sequence PWDRDIVCSP…EEHILKRIAT (315 aa).

Biotin is required as a cofactor. Mg(2+) serves as cofactor. Requires Mn(2+) as cofactor.

The catalysed reaction is hydrogencarbonate + acetyl-CoA + ATP = malonyl-CoA + ADP + phosphate + H(+). It carries out the reaction N(6)-biotinyl-L-lysyl-[protein] + hydrogencarbonate + ATP = N(6)-carboxybiotinyl-L-lysyl-[protein] + ADP + phosphate + H(+). It functions in the pathway secondary metabolite biosynthesis. The protein operates within lipid metabolism; malonyl-CoA biosynthesis; malonyl-CoA from acetyl-CoA: step 1/1. Functionally, acetyl-CoA carboxylase; part of the gene cluster that mediates the biosynthesis of the dimeric xanthones cryptosporioptides. The pathway begins with the synthesis of atrochrysone thioester by the polyketide synthase dmx-nrPKS. The atrochrysone carboxyl ACP thioesterase dmxR1 then breaks the thioester bond and releases the atrochrysone carboxylic acid from dmx-nrPKS. Atrochrysone carboxylic acid is decarboxylated by the decarboxylase dmxR15, and oxidized by the anthrone oxygenase dmxR16 to yield emodin. Emodin is then reduced to emodin hydroquinone by the oxidoreductase dmxR7. A-ring reduction by the short chain dehydrogenase dmxR18, dehydration by the scytalone dehydratase-like protein dmxR17 and probable spontaneous re-oxidation, results in overall deoxygenation to chrysophanol. Baeyer-Villiger oxidation by the Baeyer-Villiger monooxygenase (BVMO) dmxR6 then yields monodictylactone in equilibrium with monodictyphenone. In the case of the cryptosporioptides biosynthesis, monodictylactone is reduced at C-12 to an alcohol (by the short chain dehydrogenases dmxR12 or dmxR8) and hydroxylated at C-5 by dmxR9, yielding the electron-rich aromatic which could eliminate H(2)O to form the ortho-quinonemethide, followed by tautomerisation to paraquinone and complete the formal reduction to produce the 10-methylgroup. Conjugate addition of C-4a-OH to the resulting paraquinone by the monooxygenase dmxR10 then gives cyclohexadienone, which is then reduced at C-5 by the short chain dehydrogenase dmxR3 to give the dihydroxanthone. The 6,7-epoxide in the cryptosporioptides could be introduced by the cytochrome P450 monooxygenase dmxL3. The highly reducing PKS dmxL2 manufactures butyrate, which is further carboxylated by dmxL1 to form ethylmalonate. It is not yet clear whether the carboxylation occurs while the butyrate is attached to the ACP of dmxL2, but this unusual fungal metabolite could then be esterified to O-5 by the O-acetyltransferase dmxR13. Finally, dimerization performed by dmxR5 gives the observed dimers cryptosporioptides A, B and C as the final products of the pathway. The polypeptide is Acetyl-CoA carboxylase dmxL1 (Cryptosporiopsis sp. (strain 8999)).